The chain runs to 374 residues: Histidinol-phosphate aminotransferase (374 aa).

N6-(pyridoxal phosphate)lysine is present on K215.

The protein belongs to the class-II pyridoxal-phosphate-dependent aminotransferase family. Histidinol-phosphate aminotransferase subfamily. As to quaternary structure, homodimer. Pyridoxal 5'-phosphate serves as cofactor.

The enzyme catalyses L-histidinol phosphate + 2-oxoglutarate = 3-(imidazol-4-yl)-2-oxopropyl phosphate + L-glutamate. The protein operates within amino-acid biosynthesis; L-histidine biosynthesis; L-histidine from 5-phospho-alpha-D-ribose 1-diphosphate: step 7/9. This Yersinia enterocolitica serotype O:8 / biotype 1B (strain NCTC 13174 / 8081) protein is Histidinol-phosphate aminotransferase.